Consider the following 340-residue polypeptide: Major histocompatibility complex class I-related gene protein (340 aa).

The N-terminal stretch at 1–22 is a signal peptide; it reads MGELMAFLLPLIIVLMVKHSNS. Residues 23 to 109 are alpha-1; it reads RTHSLRYFRL…KRLQRHYNHS (87 aa). The interval 23 to 201 is antigen-binding cleft; the sequence is RTHSLRYFRL…EYGKDTLQRT (179 aa). Over 23 to 302 the chain is Extracellular; sequence RTHSLRYFRL…QESEAIPLVM (280 aa). Tyr-29 and Arg-31 together coordinate 8-(9H-purin-6-yl)-2-oxa-8-azabicyclo[3.3.1]nona-3,6-diene-4,6-dicarbaldehyde. Arg-31, Ser-46, and Lys-65 together coordinate 5-(2-oxoethylideneamino)-6-(D-ribitylamino)uracil. Residues Arg-31, Ser-46, and Lys-65 each contribute to the 5-(2-oxopropylideneamino)-6-(D-ribitylamino)uracil site. Arg-31, Ser-46, and Lys-65 together coordinate 7-hydroxy-6-methyl-8-(1-D-ribityl)lumazine. Lys-65 and His-80 together coordinate 8-(9H-purin-6-yl)-2-oxa-8-azabicyclo[3.3.1]nona-3,6-diene-4,6-dicarbaldehyde. Lys-65 provides a ligand contact to 2-amino-4-oxopteridine-6-carbaldehyde. A pyridoxal-binding site is contributed by Lys-65. Residue Asn-107 is glycosylated (N-linked (GlcNAc...) asparagine). The segment at 110-201 is alpha-2; the sequence is GSHTYQRMIG…EYGKDTLQRT (92 aa). An 8-(9H-purin-6-yl)-2-oxa-8-azabicyclo[3.3.1]nona-3,6-diene-4,6-dicarbaldehyde-binding site is contributed by Arg-116. Arg-116, Tyr-174, and Gln-175 together coordinate 5-(2-oxoethylideneamino)-6-(D-ribitylamino)uracil. Residues Arg-116, Tyr-174, and Gln-175 each contribute to the 5-(2-oxopropylideneamino)-6-(D-ribitylamino)uracil site. 7-hydroxy-6-methyl-8-(1-D-ribityl)lumazine-binding residues include Arg-116, Tyr-174, and Gln-175. 2 disulfide bridges follow: Cys-120–Cys-183 and Cys-222–Cys-278. Residues 202–293 form an alpha-3 region; that stretch reads EPPLVRVNRK…GVHMVLQVPQ (92 aa). Positions 203–282 constitute an Ig-like C1-type domain; it reads PPLVRVNRKE…SNLYSCHVEH (80 aa). Residues 294–302 are connecting peptide; sequence ESEAIPLVM. A helical membrane pass occupies residues 303–323; sequence KAVSGSIVFVIVLTGVGVLVW. Residues 324–340 are Cytoplasmic-facing; the sequence is RRRPREQNGAVYLPTPD.

The protein belongs to the MHC class I family. In terms of assembly, heterotrimer that consists of MR1, B2M and metabolite antigen. Major classes of metabolite ligands presented by MR1 include riboflavin-related antigens, pyrimidines and ribityl lumazines, nucleobase adducts and folate derivatives. Forms reversible covalent Schiff base complexes with microbial pyrimidine-based metabolite, which serves as a molecular switch triggering complete folding, stable association with B2M and translocation of the ternary complex from endoplasmic reticulum to the plasma membrane. Alternatively, forms non-Schiff base complexes with ribityl lumazines. On antigen-presenting cells, the ternary complex interacts with TCR on MR1-restricted T cells. Interacts with TAPBP and TAPBPL chaperones in the endoplasmic reticulum. TAPBP associated or not with MHC class I peptide loading complex binds ligand-free MR1 or MR1-B2M complex, providing for stable MR1 pools ready for metabolite antigen processing. TAPBPL interacts with MR1 in a ligand-independent way; this interaction may stabilize MR1 pool and facilitate ligand loading and dissociation. Structurally, MR1-B2M heterodimer adopts a topology similar to classical MHC class I molecules, with alpha-1 and alpha-2 domains of MR1 forming the antigen-binding cleft composed of two alpha-helices resting on a floor of 7-stranded anti-parallel beta-pleated sheet. MR1-B2M heterodimer (via alpha-helices) interacts with TCR (via CDR domains). N-glycosylated.

It is found in the cell membrane. The protein resides in the endoplasmic reticulum membrane. It localises to the golgi apparatus membrane. Its subcellular location is the early endosome membrane. The protein localises to the late endosome membrane. Antigen-presenting molecule specialized in displaying microbial pyrimidine-based metabolites to alpha-beta T cell receptors (TCR) on innate-type mucosal-associated invariant T (MAIT) cells. In complex with B2M preferentially presents riboflavin-derived metabolites to semi-invariant TCRs on MAIT cells, guiding immune surveillance of the microbial metabolome at mucosal epithelial barriers. Signature pyrimidine-based microbial antigens are generated via non-enzymatic condensation of metabolite intermediates of the riboflavin pathway with by-products arising from other metabolic pathways such as glycolysis. Typical potent antigenic metabolites are 5-(2-oxoethylideneamino)-6-D-ribitylaminouracil (5-OE-RU) and 5-(2-oxopropylideneamino)-6-D-ribitylaminouracil (5-OP-RU), products of condensation of 5-amino-6-D-ribityaminouracil (5-A-RU) with glyoxal or methylglyoxal by-products, respectively. May present microbial antigens to various MAIT cell subsets, providing for unique recognition of diverse microbes, including pathogens that do not synthesize riboflavin. Upon antigen recognition, elicits rapid innate-type MAIT cell activation to eliminate pathogenic microbes by directly killing infected cells. During T cell development, drives thymic selection and post-thymic terminal differentiation of MAIT cells in a process dependent on commensal microflora. Acts as an immune sensor of cancer cell metabolome. May present a tumor-specific or -associated metabolite essential for cancer cell survival to a pan-cancer TCR on a non-MAIT CD8-positive T cell clone, triggering T cell-mediated killing of a wide range of cancer cell types. May present tumor-enriched pyridoxal and pyridoxal 5'-phosphate antigens, enabling preferential recognition of cancer cells. Presents nucleobase carbonyl adducts generated during oxidative stress. Captures M3Ade, a nucleobase adduct composed of one adenine modified by a malondialdehyde trimer, for recognition by MR1-restricted T cell clones expressing a polyclonal TCR repertoire. The protein is Major histocompatibility complex class I-related gene protein of Pongo pygmaeus (Bornean orangutan).